The sequence spans 880 residues: DNA mismatch repair protein MutS (880 aa).

Position 635–642 (Gly-635–Ser-642) interacts with ATP.

Belongs to the DNA mismatch repair MutS family.

In terms of biological role, this protein is involved in the repair of mismatches in DNA. It is possible that it carries out the mismatch recognition step. This protein has a weak ATPase activity. In Nitrosomonas eutropha (strain DSM 101675 / C91 / Nm57), this protein is DNA mismatch repair protein MutS.